The primary structure comprises 194 residues: Leucyl/phenylalanyl-tRNA--protein transferase (194 aa).

It belongs to the L/F-transferase family.

The protein localises to the cytoplasm. It catalyses the reaction N-terminal L-lysyl-[protein] + L-leucyl-tRNA(Leu) = N-terminal L-leucyl-L-lysyl-[protein] + tRNA(Leu) + H(+). The enzyme catalyses N-terminal L-arginyl-[protein] + L-leucyl-tRNA(Leu) = N-terminal L-leucyl-L-arginyl-[protein] + tRNA(Leu) + H(+). It carries out the reaction L-phenylalanyl-tRNA(Phe) + an N-terminal L-alpha-aminoacyl-[protein] = an N-terminal L-phenylalanyl-L-alpha-aminoacyl-[protein] + tRNA(Phe). Its function is as follows. Functions in the N-end rule pathway of protein degradation where it conjugates Leu, Phe and, less efficiently, Met from aminoacyl-tRNAs to the N-termini of proteins containing an N-terminal arginine or lysine. The protein is Leucyl/phenylalanyl-tRNA--protein transferase of Chlorobium luteolum (strain DSM 273 / BCRC 81028 / 2530) (Pelodictyon luteolum).